We begin with the raw amino-acid sequence, 356 residues long: C-X-C chemokine receptor type 2 (356 aa).

The Extracellular portion of the chain corresponds to 1–46 (MEYINWDNYSLEDLFGDIDNYTYNTEMPIIPADSAPCRPESLDINK). N-linked (GlcNAc...) asparagine glycosylation is found at asparagine 8 and asparagine 20. A helical membrane pass occupies residues 47–73 (YAVVVIYVLVFVLNLLGNSLVIMVVLY). Residues 74–82 (SRVSHSVTD) are Cytoplasmic-facing. Residues 83–103 (VYLLNLAIADLLFALTLPIWA) form a helical membrane-spanning segment. Topologically, residues 104-118 (VSKVKGWIFGTPLCK) are extracellular. A disulfide bridge connects residues cysteine 117 and cysteine 194. The chain crosses the membrane as a helical span at residues 119-140 (IVSLLKEVNFYSGILLLASISM). Over 141-161 (DRYLAIVHATRRLTQKKHWVK) the chain is Cytoplasmic. The helical transmembrane segment at 162-181 (FICLGIWALSLILSLPIFVF) threads the bilayer. Over 182–206 (RRAINPPYSSPVCYEDMGTNTTKLR) the chain is Extracellular. Residues 207–229 (IVMRALPQTFGFIVPLMIMLFCY) form a helical membrane-spanning segment. The Cytoplasmic portion of the chain corresponds to 230–249 (GLTLRTLFEAHMGQKHRAMR). A helical transmembrane segment spans residues 250–269 (VIFAVVLVFLLCWLPYNLVA). Residues 270–290 (DTLMRLQAIEETCQRRNDIGR) lie on the Extracellular side of the membrane. The helical transmembrane segment at 291-311 (ALDATEILGFFHSCLNPLIYA) threads the bilayer. The Cytoplasmic portion of the chain corresponds to 312–356 (FIGQKFRHGLLKIMAFHGLISKEYLPKDSRPSFVGSSSANTSTTF).

It belongs to the G-protein coupled receptor 1 family. Interacts with IL8. Interacts with GNAI2. Post-translationally, phosphorylated upon ligand binding; which is required for desensitization.

It is found in the cell membrane. In terms of biological role, receptor for interleukin-8 which is a powerful neutrophil chemotactic factor. Binding of IL-8 to the receptor causes activation of neutrophils. This response is mediated via a G-protein that activates a phosphatidylinositol-calcium second messenger system. Binds to IL-8 with high affinity. Also binds with high affinity to CXCL3, GRO/MGSA and NAP-2. The polypeptide is C-X-C chemokine receptor type 2 (CXCR2) (Canis lupus familiaris (Dog)).